The chain runs to 207 residues: MEELLKELERIREEAKPLVEQRFEEFKRLGEEGTEEDLFCELSFCVLTANWSAEGGIRAQKEIGKGFVHLPLEELAEKLREVGHRYPQKRAEFIVENRKLLGKLKNLVKGDPFQSREFLVRNAKGIGWKEASHFLRNTGVEDLAILDKHVLKLMKRHGLIQEIPKGWSKKRYLYVEEILRKVAEAFGESPGKFDLYLWYLVKGKVDK.

Residues lysine 129 and aspartate 147 contribute to the active site.

The protein belongs to the type-2 OGG1 family.

The enzyme catalyses 2'-deoxyribonucleotide-(2'-deoxyribose 5'-phosphate)-2'-deoxyribonucleotide-DNA = a 3'-end 2'-deoxyribonucleotide-(2,3-dehydro-2,3-deoxyribose 5'-phosphate)-DNA + a 5'-end 5'-phospho-2'-deoxyribonucleoside-DNA + H(+). Catalyzes the excision of an oxidatively damaged form of guanine (7,8-dihydro-8-oxoguanine = 8-oxoG) from DNA. Also cleaves the DNA backbone at apurinic/apyrimidinic sites (AP sites). The sequence is that of 8-oxoguanine DNA glycosylase/AP lyase from Thermotoga sp. (strain RQ2).